The sequence spans 674 residues: CRS2-associated factor 1, chloroplastic (674 aa).

Residues 1–54 (MATARLPSRSFLSPAQQSYPRLPASVRLCLSHHEQPPTGPKRHRRAATSHPAFS) constitute a chloroplast transit peptide. Residues 31-61 (SHHEQPPTGPKRHRRAATSHPAFSAAARGRA) form a disordered region. The span at 48–57 (TSHPAFSAAA) shows a compositional bias: low complexity. CRM domains are found at residues 183-279 (EPLT…TRPC) and 301-397 (GGLT…LPPL). Residues 554–576 (GLLCLLEQAIHSGRALVLSEDEL) form a CRS2 binding region.

As to quaternary structure, interacts with CRS2 and RNA. Part of large ribonucleo-protein complexes that include group IIB introns, CRS2 and CAF1.

The protein resides in the plastid. It is found in the chloroplast stroma. Functionally, required for the splicing of group IIB introns in chloroplasts. Forms splicing particles with CRS2. Interacts with RNA and confers intron specificity of the splicing particles. The polypeptide is CRS2-associated factor 1, chloroplastic (CAF1) (Zea mays (Maize)).